A 201-amino-acid chain; its full sequence is Pyrrolidone-carboxylate peptidase (201 aa).

Catalysis depends on residues Glu-81, Cys-143, and His-168.

Belongs to the peptidase C15 family. As to quaternary structure, homotetramer.

Its subcellular location is the cytoplasm. It carries out the reaction Release of an N-terminal pyroglutamyl group from a polypeptide, the second amino acid generally not being Pro.. In terms of biological role, removes 5-oxoproline from various penultimate amino acid residues except L-proline. This Halalkalibacterium halodurans (strain ATCC BAA-125 / DSM 18197 / FERM 7344 / JCM 9153 / C-125) (Bacillus halodurans) protein is Pyrrolidone-carboxylate peptidase (pcp).